A 274-amino-acid polypeptide reads, in one-letter code: Diaminopimelate epimerase (274 aa).

Positions 11, 44, and 64 each coordinate substrate. Cysteine 73 acts as the Proton donor in catalysis. Substrate contacts are provided by residues 74–75 (GN), asparagine 157, asparagine 190, and 208–209 (ER). The Proton acceptor role is filled by cysteine 217. 218 to 219 (GS) is a substrate binding site.

The protein belongs to the diaminopimelate epimerase family. In terms of assembly, homodimer.

Its subcellular location is the cytoplasm. The catalysed reaction is (2S,6S)-2,6-diaminopimelate = meso-2,6-diaminopimelate. Its pathway is amino-acid biosynthesis; L-lysine biosynthesis via DAP pathway; DL-2,6-diaminopimelate from LL-2,6-diaminopimelate: step 1/1. Catalyzes the stereoinversion of LL-2,6-diaminopimelate (L,L-DAP) to meso-diaminopimelate (meso-DAP), a precursor of L-lysine and an essential component of the bacterial peptidoglycan. This Histophilus somni (strain 2336) (Haemophilus somnus) protein is Diaminopimelate epimerase.